Here is a 336-residue protein sequence, read N- to C-terminus: MSQRSLPDEKSGLHPRNRHRQRYDFALLVEAHPPLAAFVRLNQYEDASIDFADAQAVKTLNQALLKCYYGIAAWDIPPQFLCPPIPGRADYVHCLADLLAAGNDGNMPYGGNVRVLDIGTGANLVYPIIGQKEYGWHFVGTDINVEALENAQGIVAANPGLAGAIELRLQRNVGAVFSGVVQESERFDLTMCNPPFHASQAAAMAGTERKWHHLERSRGKPTGKGVRRVRSGRMSGNRLNFGGQAAELYCEGGEEGFISRMIKESAAVGAQCLWFTTLVSKAATLPAVYRSLRAVDAYKVKTIDMAQGQKKSRFVAWTFHDTAGQRAWRRQHWRDV.

Residues 212–231 (HHLERSRGKPTGKGVRRVRS) show a composition bias toward basic residues. The interval 212 to 234 (HHLERSRGKPTGKGVRRVRSGRM) is disordered.

The protein belongs to the methyltransferase superfamily. METTL16/RlmF family.

It localises to the cytoplasm. It catalyses the reaction adenosine(1618) in 23S rRNA + S-adenosyl-L-methionine = N(6)-methyladenosine(1618) in 23S rRNA + S-adenosyl-L-homocysteine + H(+). In terms of biological role, specifically methylates the adenine in position 1618 of 23S rRNA. The protein is Ribosomal RNA large subunit methyltransferase F of Methylobacillus flagellatus (strain ATCC 51484 / DSM 6875 / VKM B-1610 / KT).